We begin with the raw amino-acid sequence, 111 residues long: MTRGFGPFGKIQEALKKAQEVRDGAQRLQKELEEMEIVGEAGNGLVKVTVNGNQEPLKVSLDPQVLQEPVDVVEDLLLTAMVNAYTQSAETMRKRMEELTGNISLPGLGLG.

Belongs to the YbaB/EbfC family. As to quaternary structure, homodimer.

The protein resides in the cytoplasm. The protein localises to the nucleoid. Functionally, binds to DNA and alters its conformation. May be involved in regulation of gene expression, nucleoid organization and DNA protection. The sequence is that of Nucleoid-associated protein CYA_1369 from Synechococcus sp. (strain JA-3-3Ab) (Cyanobacteria bacterium Yellowstone A-Prime).